We begin with the raw amino-acid sequence, 350 residues long: Phenylalanine--tRNA ligase alpha subunit (350 aa).

Glu257 is a binding site for Mg(2+).

It belongs to the class-II aminoacyl-tRNA synthetase family. Phe-tRNA synthetase alpha subunit type 1 subfamily. In terms of assembly, tetramer of two alpha and two beta subunits. Mg(2+) is required as a cofactor.

The protein localises to the cytoplasm. It catalyses the reaction tRNA(Phe) + L-phenylalanine + ATP = L-phenylalanyl-tRNA(Phe) + AMP + diphosphate + H(+). This is Phenylalanine--tRNA ligase alpha subunit from Listeria monocytogenes serovar 1/2a (strain ATCC BAA-679 / EGD-e).